The chain runs to 82 residues: Small ribosomal subunit protein bS18 (82 aa).

The interval 1–20 (MSETSSAPVRRPFHRRRKTC) is disordered.

It belongs to the bacterial ribosomal protein bS18 family. In terms of assembly, part of the 30S ribosomal subunit. Forms a tight heterodimer with protein bS6.

Its function is as follows. Binds as a heterodimer with protein bS6 to the central domain of the 16S rRNA, where it helps stabilize the platform of the 30S subunit. This Rhizobium johnstonii (strain DSM 114642 / LMG 32736 / 3841) (Rhizobium leguminosarum bv. viciae) protein is Small ribosomal subunit protein bS18.